Consider the following 544-residue polypeptide: MKPKQLIFHDAARGKIWRGVEALAEAVKVTLGPRGRTVILERDFGPPQIVNSGVLVAKSIELEDRFENMGAQLLREVAARTSEMAGDGTTTATVLAHGMIQEGLRYLAGGMNPMDLKRGIELAIDTVVAELQRMAKPCASSQEIAHVAAISANNDRSIGDLLASAIDKVGREGAISIEDGSGLVSVLEVVEGMQFDRGFLSPYFINNAERQSAVLEDVSILLCEGRLTSLNDLLPLLEEVVKAGRPLLVIAEDVDSDSLAALVINTMRGTLKTCAVKAPGFGDRRKAMVQDIAVLTGGTVVSDEVGLTLGKVRLQDLGRATRAEITKESTTLIGGAGKPQAIRDRIATIRKERELAASDYDREKLDERAAKLSGGVALIKVGAATETELKERKLRVEDALHATRAAVEEGIVPGGGVALLRARRTLAGLTGGTLDETSGIRLVSRALEEPLRRIVSNAGDEPSVILNRVDESPDPAFGYNAATRAYGDLLQMGVIDPAKVTRLALQNAASIASLILTTDCMIATAPKPSSEEGALNPEGSSPMF.

Residues 30 to 33 (TLGP), 87 to 91 (DGTTT), Gly-415, 480 to 482 (NAA), and Asp-496 contribute to the ATP site.

The protein belongs to the chaperonin (HSP60) family. Forms a cylinder of 14 subunits composed of two heptameric rings stacked back-to-back. Interacts with the co-chaperonin GroES.

It localises to the cytoplasm. The enzyme catalyses ATP + H2O + a folded polypeptide = ADP + phosphate + an unfolded polypeptide.. Functionally, together with its co-chaperonin GroES, plays an essential role in assisting protein folding. The GroEL-GroES system forms a nano-cage that allows encapsulation of the non-native substrate proteins and provides a physical environment optimized to promote and accelerate protein folding. The protein is Chaperonin GroEL 1 of Polaromonas naphthalenivorans (strain CJ2).